A 211-amino-acid polypeptide reads, in one-letter code: MLMEKYHDFEPNFNIVEIFESLQGEGFNTGMPSVFVRFGKCNLDCPWCDTPYNNFKRWSVSQILEKVRSFSSKNIIITGGEPTIVPKIEYLLEQFKSDGYFLAIETNGLKAIPAQIDYIATSPKSLYAHKYEKRCIPFANEVRIVMDSNMPSFCELIEQKIKAKNYYLSPCEIDGKMNLLETITLLGQLNQRSNKPKWQLSLQTHKLIGIE.

Substrate is bound by residues 22–24 (LQG) and arginine 37. The 184-residue stretch at 28-211 (NTGMPSVFVR…LQTHKLIGIE (184 aa)) folds into the Radical SAM core domain. [4Fe-4S] cluster contacts are provided by cysteine 41, cysteine 45, and cysteine 48. Threonine 50 contacts Mg(2+). Residue threonine 78 coordinates substrate. S-adenosyl-L-methionine-binding positions include glycine 80 and 122-124 (SPK).

The protein belongs to the radical SAM superfamily. 7-carboxy-7-deazaguanine synthase family. Homodimer. The cofactor is [4Fe-4S] cluster. S-adenosyl-L-methionine is required as a cofactor. It depends on Mg(2+) as a cofactor.

The enzyme catalyses 6-carboxy-5,6,7,8-tetrahydropterin + H(+) = 7-carboxy-7-deazaguanine + NH4(+). It participates in purine metabolism; 7-cyano-7-deazaguanine biosynthesis. Catalyzes the complex heterocyclic radical-mediated conversion of 6-carboxy-5,6,7,8-tetrahydropterin (CPH4) to 7-carboxy-7-deazaguanine (CDG), a step common to the biosynthetic pathways of all 7-deazapurine-containing compounds. The polypeptide is 7-carboxy-7-deazaguanine synthase (Haemophilus influenzae (strain ATCC 51907 / DSM 11121 / KW20 / Rd)).